A 137-amino-acid polypeptide reads, in one-letter code: Ribosome-binding factor A (137 aa).

It belongs to the RbfA family. As to quaternary structure, monomer. Binds 30S ribosomal subunits, but not 50S ribosomal subunits or 70S ribosomes.

It localises to the cytoplasm. One of several proteins that assist in the late maturation steps of the functional core of the 30S ribosomal subunit. Associates with free 30S ribosomal subunits (but not with 30S subunits that are part of 70S ribosomes or polysomes). Required for efficient processing of 16S rRNA. May interact with the 5'-terminal helix region of 16S rRNA. This is Ribosome-binding factor A from Trichodesmium erythraeum (strain IMS101).